Reading from the N-terminus, the 446-residue chain is Chromosomal replication initiator protein DnaA (446 aa).

The interval 1–72 (MKNISDLWNQ…ADTIYDLTGE (72 aa)) is domain I, interacts with DnaA modulators. The interval 72 to 109 (EELSIKFVIPQNQNEEDFMPKSPIKKMSKEEPADFPQN) is domain II. The domain III, AAA+ region stretch occupies residues 110–326 (MLNPKYTFDT…GALIRVVAYS (217 aa)). Glycine 154, glycine 156, lysine 157, and threonine 158 together coordinate ATP. The tract at residues 327–446 (SLINKDINAD…QIKEIKEQLR (120 aa)) is domain IV, binds dsDNA.

Belongs to the DnaA family. As to quaternary structure, oligomerizes as a right-handed, spiral filament on DNA at oriC.

It localises to the cytoplasm. Its function is as follows. Plays an essential role in the initiation and regulation of chromosomal replication. ATP-DnaA binds to the origin of replication (oriC) to initiate formation of the DNA replication initiation complex once per cell cycle. Binds the DnaA box (a 9 base pair repeat at the origin) and separates the double-stranded (ds)DNA. Forms a right-handed helical filament on oriC DNA; dsDNA binds to the exterior of the filament while single-stranded (ss)DNA is stabiized in the filament's interior. The ATP-DnaA-oriC complex binds and stabilizes one strand of the AT-rich DNA unwinding element (DUE), permitting loading of DNA polymerase. After initiation quickly degrades to an ADP-DnaA complex that is not apt for DNA replication. Binds acidic phospholipids. In Bacillus licheniformis (strain ATCC 14580 / DSM 13 / JCM 2505 / CCUG 7422 / NBRC 12200 / NCIMB 9375 / NCTC 10341 / NRRL NRS-1264 / Gibson 46), this protein is Chromosomal replication initiator protein DnaA.